The chain runs to 426 residues: Glutamate-1-semialdehyde 2,1-aminomutase (426 aa).

At K265 the chain carries N6-(pyridoxal phosphate)lysine.

Belongs to the class-III pyridoxal-phosphate-dependent aminotransferase family. HemL subfamily. As to quaternary structure, homodimer. Pyridoxal 5'-phosphate is required as a cofactor.

The protein localises to the cytoplasm. The catalysed reaction is (S)-4-amino-5-oxopentanoate = 5-aminolevulinate. Its pathway is porphyrin-containing compound metabolism; protoporphyrin-IX biosynthesis; 5-aminolevulinate from L-glutamyl-tRNA(Glu): step 2/2. This chain is Glutamate-1-semialdehyde 2,1-aminomutase, found in Escherichia coli O9:H4 (strain HS).